Here is a 267-residue protein sequence, read N- to C-terminus: MSIDESSDNPTPRPKLGRPPKSEADKRAEKEAQKDGKKPALSTRQRRILEVIRDSTIIRGYPPSIREIADAVGLHSTSSVSYHLTQLEKRGYLRRDGKRPRAVDVRAFDGGQLTNESTKKNAGSPQPTSAAIPEPTTEGETMPEATYVPVVGQIAAGAPILAEQNVEAHFPLPQELVGNGELFLLQVVGESMHDAGIFNGDWVVVRSQSVAEFGDFVAAMIDGEATVKEFQKDADGLWLIPHNPLFEPIPAEEATILGKVAAVLRKI.

Residues 1 to 44 (MSIDESSDNPTPRPKLGRPPKSEADKRAEKEAQKDGKKPALSTR) are disordered. The segment covering 20-38 (PKSEADKRAEKEAQKDGKK) has biased composition (basic and acidic residues). The H-T-H motif DNA-binding region spans 65-85 (IREIADAVGLHSTSSVSYHLT). The interval 111–140 (GQLTNESTKKNAGSPQPTSAAIPEPTTEGE) is disordered. Residues 112-129 (QLTNESTKKNAGSPQPTS) show a composition bias toward polar residues. Residues Ser-191 and Lys-228 each act as for autocatalytic cleavage activity in the active site.

This sequence belongs to the peptidase S24 family. In terms of assembly, homodimer.

It carries out the reaction Hydrolysis of Ala-|-Gly bond in repressor LexA.. In terms of biological role, represses a number of genes involved in the response to DNA damage (SOS response), including recA and lexA. In the presence of single-stranded DNA, RecA interacts with LexA causing an autocatalytic cleavage which disrupts the DNA-binding part of LexA, leading to derepression of the SOS regulon and eventually DNA repair. The protein is LexA repressor of Corynebacterium jeikeium (strain K411).